A 161-amino-acid polypeptide reads, in one-letter code: Regulator of ribonuclease activity A (161 aa).

This sequence belongs to the RraA family. In terms of assembly, homotrimer. Binds to both RNA-binding sites in the C-terminal region of Rne and to RhlB.

The protein resides in the cytoplasm. Its function is as follows. Globally modulates RNA abundance by binding to RNase E (Rne) and regulating its endonucleolytic activity. Can modulate Rne action in a substrate-dependent manner by altering the composition of the degradosome. Modulates RNA-binding and helicase activities of the degradosome. The sequence is that of Regulator of ribonuclease activity A from Pseudoalteromonas atlantica (strain T6c / ATCC BAA-1087).